The sequence spans 859 residues: Bifunctional heparan sulfate N-deacetylase/N-sulfotransferase 1 (859 aa).

Over 1 to 13 the chain is Cytoplasmic; sequence MIITPYLNPRLVK. A helical; Signal-anchor for type II membrane protein membrane pass occupies residues 14-34; that stretch reads PLKWLAIIILLYFLYFSLFSI. The tract at residues 34–575 is heparan sulfate N-deacetylase 1; sequence INKKPGKPRK…PRHQAILPPS (542 aa). Topologically, residues 35-859 are lumenal; it reads NKKPGKPRKP…WLEEAVRIRV (825 aa). N50, N74, N210, N262, N378, and N429 each carry an N-linked (GlcNAc...) asparagine glycan. Positions 576-859 are heparan sulfate N-sulfotransferase 1; sequence MSCSKKSLPD…WLEEAVRIRV (284 aa). The active-site For sulfotransferase activity is K593. 593-597 is a 3'-phosphoadenylyl sulfate binding site; the sequence is KTGST. N-linked (GlcNAc...) asparagine glycans are attached at residues N608 and N643. Position 687 (S687) interacts with 3'-phosphoadenylyl sulfate. A glycan (N-linked (GlcNAc...) asparagine) is linked at N715. C796 and C805 are joined by a disulfide. 810–814 is a 3'-phosphoadenylyl sulfate binding site; it reads KGRKY.

This sequence belongs to the sulfotransferase 1 family. NDST subfamily. In terms of assembly, monomer.

Its subcellular location is the golgi apparatus membrane. The enzyme catalyses alpha-D-glucosaminyl-[heparan sulfate](n) + 3'-phosphoadenylyl sulfate = N-sulfo-alpha-D-glucosaminyl-[heparan sulfate](n) + adenosine 3',5'-bisphosphate + 2 H(+). The protein operates within glycan metabolism; heparan sulfate biosynthesis. It participates in glycan metabolism; heparin biosynthesis. Essential bifunctional enzyme that catalyzes both the N-deacetylation and the N-sulfation of glucosamine (GlcNAc) of the glycosaminoglycan in heparan sulfate. Modifies the GlcNAc-GlcA disaccharide repeating sugar backbone to make N-sulfated heparosan, a prerequisite substrate for later modifications in heparin biosynthesis. This Caenorhabditis briggsae protein is Bifunctional heparan sulfate N-deacetylase/N-sulfotransferase 1 (hst-1).